The chain runs to 206 residues: Max dimerization protein 3 (206 aa).

Residues 8 to 25 are interaction with SIN3A and SIN3B; it reads IQVLLQAAEFLERREREA. In terms of domain architecture, bHLH spans 57–109; sequence SGRHVHNELEKRRRAQLKRCLEQLRQQMPLGVDHTRYTTLSLLRGARMHIQKL.

As to quaternary structure, efficient DNA binding requires dimerization with another bHLH protein. Binds DNA as a heterodimer with MAX. Interacts with SIN3A AND SIN3B. Interacts with RNF17.

It localises to the nucleus. Functionally, transcriptional repressor. Binds with MAX to form a sequence-specific DNA-binding protein complex which recognizes the core sequence 5'-CAC[GA]TG-3'. Antagonizes MYC transcriptional activity by competing for MAX and suppresses MYC dependent cell transformation. This is Max dimerization protein 3 (Mxd3) from Rattus norvegicus (Rat).